A 31-amino-acid chain; its full sequence is Spectrin beta chain, non-erythrocytic 1 (31 aa).

Spectrin repeat units follow at residues 1–10 (VLLLSQDYGK), 11–19 (YKEVAELTR), and 20–31 (TQILAASYELHK). Y27 is modified (phosphotyrosine).

Belongs to the spectrin family. Interacts with ANK2. Interacts with CPNE4 (via VWFA domain). Like erythrocyte spectrin, the spectrin-like proteins are capable to form dimers which can further associate to tetramers. Associates with the gamma-tubulin complex in brain, but not in kidney, liver, sperm, or uterus. Interacts with CAMSAP1. Can form heterodimers with SPTAN1.

Its subcellular location is the cytoplasm. The protein resides in the cytoskeleton. It is found in the myofibril. It localises to the sarcomere. The protein localises to the m line. Its subcellular location is the cytosol. The protein resides in the cell membrane. Fodrin, which seems to be involved in secretion, interacts with calmodulin in a calcium-dependent manner and is thus candidate for the calcium-dependent movement of the cytoskeleton at the membrane. Plays a critical role in central nervous system development and function. This chain is Spectrin beta chain, non-erythrocytic 1 (SPTBN1), found in Capra hircus (Goat).